The following is a 560-amino-acid chain: Solute carrier family 22 member 6 (560 aa).

At 1–15 the chain is on the cytoplasmic side; the sequence is MAFSDLLEQVGSTGR. Residues 16-36 form a helical membrane-spanning segment; sequence FQVLHVTLLSMPILMMASHNL. The Extracellular segment spans residues 37 to 143; that stretch reads LQNFVAAVPP…LVCDYRALKQ (107 aa). A helical transmembrane segment spans residues 144-164; that stretch reads MSQTTYMGGVLVGAIVFGGLS. Residues 165-170 lie on the Cytoplasmic side of the membrane; sequence DRFGRR. The helical transmembrane segment at 171–191 threads the bilayer; the sequence is VLLLISNLMMAIGGTCVAFST. Residues 192–201 lie on the Extracellular side of the membrane; that stretch reads SFTMFCVFRV. A helical membrane pass occupies residues 202–222; that stretch reads CCGMALSGLVLNSFSLIVEWI. Topologically, residues 223-228 are cytoplasmic; that stretch reads PTRVRT. The helical transmembrane segment at 229–249 threads the bilayer; that stretch reads VVGTGTGYCYTTGQLILAAVA. Residues 250–256 lie on the Extracellular side of the membrane; sequence YCIRDWR. The chain crosses the membrane as a helical span at residues 257–277; the sequence is WLTLAVSLPFYVSFLYSWWFL. Over 278 to 345 the chain is Cytoplasmic; that stretch reads ESARWLVLTK…DLLRTSTMRT (68 aa). Residues 346-366 form a helical membrane-spanning segment; the sequence is ITICLSAVWFSTSFAYYGLSM. At 367–374 the chain is on the extracellular side; that stretch reads DLQKFGVS. Residues 375–395 form a helical membrane-spanning segment; the sequence is IYLIQIIFGAVDIPAKIIVTI. Residues 396–406 are Cytoplasmic-facing; sequence CMSMLGRRPSQ. A helical membrane pass occupies residues 407–427; it reads CGALVLAGIMILINLLVPSDL. Residues 428–433 lie on the Extracellular side of the membrane; that stretch reads QMLRTS. The chain crosses the membrane as a helical span at residues 434 to 454; the sequence is LAVIGKGCLAASFNCCYLYAG. At 455–465 the chain is on the cytoplasmic side; it reads ELYPTVIRQSG. The helical transmembrane segment at 466–486 threads the bilayer; it reads MGWVSMMARFGAMVAPMVLLL. Topologically, residues 487 to 491 are extracellular; it reads GDDYP. The helical transmembrane segment at 492–512 threads the bilayer; it reads WIPGFIYGGAPIVSGIFAFFL. Residues 513–560 are Cytoplasmic-facing; sequence PETLSQPLPDTIQDIDDRGLARTNSKRLPEKLDLAMKDPSCVLLKESV.

The protein belongs to the major facilitator (TC 2.A.1) superfamily. Organic cation transporter (TC 2.A.1.19) family. In terms of processing, glycosylated. Glycosylation is necessary for proper targeting of the transporter to the plasma membrane.

The protein resides in the cell membrane. The protein localises to the basolateral cell membrane. It is found in the basal cell membrane. Involved in the renal elimination of endogenous and exogenous organic anions. Functions as organic anion exchanger when the uptake of one molecule of organic anion is coupled with an efflux of one molecule of endogenous dicarboxylic acid (glutarate, ketoglutarate, etc). Mediates the sodium-independent uptake of p-aminohippurate (PAH), 2,3-dimercapto-1-propanesulfonic acid (DMPS), cidofovir, adefovir, 9-(2-phosphonylmethoxyethyl) guanine (PMEG), 9-(2-phosphonylmethoxyethyl) diaminopurine (PMEDAP), ochratoxin (OTA), acyclovir (ACV), 3'-azido-3-'deoxythymidine (AZT), cimetidine (CMD), 2,4-dichloro-phenoxyacetate (2,4-D), hippurate (HA), indoleacetate (IA), indoxyl sulfate (IS) and 3-carboxy-4-methyl-5-propyl-2-furanpropionate (CMPF) and edaravone sulfate. PAH uptake is inhibited by p-chloromercuribenzenesulphonate (PCMBS), diethyl pyrocarbonate (DEPC), indomethacin, sulindac, diclofenac, carprofen, okadaic acid, benzothiazolylcysteine (BTC), S-chlorotrifluoroethylcysteine (CTFC), cysteine S-conjugates S-dichlorovinylcysteine (DCVC), furosemide, steviol, phorbol 12-myristate 13-acetate (PMA), calcium ionophore A23187, benzylpenicillin, bumetamide, losartan, probenecid, phenol red, urate, glutarate and alpha-ketoglutarate. In Danio rerio (Zebrafish), this protein is Solute carrier family 22 member 6 (slc22a6).